A 150-amino-acid chain; its full sequence is 3-dehydroquinate dehydratase (150 aa).

Residue Tyr-26 is the Proton acceptor of the active site. Substrate contacts are provided by Asn-77, His-83, and Asp-90. The active-site Proton donor is the His-103. Substrate is bound by residues 104 to 105 and Arg-114; that span reads LS.

The protein belongs to the type-II 3-dehydroquinase family. Homododecamer.

It carries out the reaction 3-dehydroquinate = 3-dehydroshikimate + H2O. Its pathway is metabolic intermediate biosynthesis; chorismate biosynthesis; chorismate from D-erythrose 4-phosphate and phosphoenolpyruvate: step 3/7. Functionally, catalyzes a trans-dehydration via an enolate intermediate. This chain is 3-dehydroquinate dehydratase, found in Yersinia pseudotuberculosis serotype O:1b (strain IP 31758).